Consider the following 216-residue polypeptide: Imidazole glycerol phosphate synthase subunit HisH (216 aa).

The region spanning 2–216 is the Glutamine amidotransferase type-1 domain; sequence RVAIIDYGSG…FIANFLKWKP (215 aa). C88 functions as the Nucleophile in the catalytic mechanism. Active-site residues include H196 and E198.

In terms of assembly, heterodimer of HisH and HisF.

Its subcellular location is the cytoplasm. It catalyses the reaction 5-[(5-phospho-1-deoxy-D-ribulos-1-ylimino)methylamino]-1-(5-phospho-beta-D-ribosyl)imidazole-4-carboxamide + L-glutamine = D-erythro-1-(imidazol-4-yl)glycerol 3-phosphate + 5-amino-1-(5-phospho-beta-D-ribosyl)imidazole-4-carboxamide + L-glutamate + H(+). The catalysed reaction is L-glutamine + H2O = L-glutamate + NH4(+). Its pathway is amino-acid biosynthesis; L-histidine biosynthesis; L-histidine from 5-phospho-alpha-D-ribose 1-diphosphate: step 5/9. Functionally, IGPS catalyzes the conversion of PRFAR and glutamine to IGP, AICAR and glutamate. The HisH subunit catalyzes the hydrolysis of glutamine to glutamate and ammonia as part of the synthesis of IGP and AICAR. The resulting ammonia molecule is channeled to the active site of HisF. The protein is Imidazole glycerol phosphate synthase subunit HisH of Brucella melitensis biotype 1 (strain ATCC 23456 / CCUG 17765 / NCTC 10094 / 16M).